The primary structure comprises 365 residues: tRNA/tmRNA (uracil-C(5))-methyltransferase (365 aa).

5 residues coordinate S-adenosyl-L-methionine: Q196, Y224, N229, E245, and D298. C323 functions as the Nucleophile in the catalytic mechanism. Catalysis depends on E357, which acts as the Proton acceptor.

Belongs to the class I-like SAM-binding methyltransferase superfamily. RNA M5U methyltransferase family. TrmA subfamily.

The enzyme catalyses uridine(54) in tRNA + S-adenosyl-L-methionine = 5-methyluridine(54) in tRNA + S-adenosyl-L-homocysteine + H(+). The catalysed reaction is uridine(341) in tmRNA + S-adenosyl-L-methionine = 5-methyluridine(341) in tmRNA + S-adenosyl-L-homocysteine + H(+). Dual-specificity methyltransferase that catalyzes the formation of 5-methyluridine at position 54 (m5U54) in all tRNAs, and that of position 341 (m5U341) in tmRNA (transfer-mRNA). This is tRNA/tmRNA (uracil-C(5))-methyltransferase from Nautilia profundicola (strain ATCC BAA-1463 / DSM 18972 / AmH).